The sequence spans 60 residues: MDTKLLELLVCPVTKGHLEYDREKHELISRSARLAYPVRDGIPVMLENEARTLTDEELGL.

It belongs to the UPF0434 family.

The protein is UPF0434 protein Pnap_1922 of Polaromonas naphthalenivorans (strain CJ2).